Here is a 101-residue protein sequence, read N- to C-terminus: Synaptobrevin-B (101 aa).

Topologically, residues 1–76 (MSNNPNNSGQ…RRQMWCRNMK (76 aa)) are cytoplasmic. Residues 13–73 (KTQSILQEVD…VTIRRQMWCR (61 aa)) enclose the v-SNARE coiled-coil homology domain. Residues 77–97 (LQLIIIAVVILVLAVILIPII) traverse the membrane as a helical; Anchor for type IV membrane protein segment. Residues 98-101 (MKFV) are Vesicular-facing.

The protein belongs to the synaptobrevin family.

It localises to the cytoplasmic vesicle. Its subcellular location is the secretory vesicle membrane. Its function is as follows. Involved in the targeting and/or fusion of transport vesicles to their target membrane. This chain is Synaptobrevin-B (sybB), found in Dictyostelium discoideum (Social amoeba).